Consider the following 30-residue polypeptide: Scolopendra 20528.11 Da toxin (30 aa).

The protein belongs to the CRISP family. Venom allergen 5-like subfamily. Post-translationally, contains 3 disulfide bonds. Expressed by the venom gland.

Its subcellular location is the secreted. The protein is Scolopendra 20528.11 Da toxin of Scolopendra angulata (Barbados giant red centipede).